Reading from the N-terminus, the 329-residue chain is L-lactate dehydrogenase (329 aa).

Residues Val18, Glu39, Lys46, Tyr71, and 85–86 (GA) each bind NAD(+). Gln88 and Arg94 together coordinate substrate. Residues Ser107, 124-126 (AAN), and Ser149 each bind NAD(+). Substrate is bound at residue 126 to 129 (NPVD). Residue 154-157 (DSAR) coordinates substrate. Residues Arg159 and His174 each coordinate beta-D-fructose 1,6-bisphosphate. Catalysis depends on His181, which acts as the Proton acceptor. Tyr226 carries the post-translational modification Phosphotyrosine. Thr235 provides a ligand contact to substrate.

It belongs to the LDH/MDH superfamily. LDH family. Homotetramer.

It is found in the cytoplasm. The enzyme catalyses (S)-lactate + NAD(+) = pyruvate + NADH + H(+). It functions in the pathway fermentation; pyruvate fermentation to lactate; (S)-lactate from pyruvate: step 1/1. Allosterically activated by fructose 1,6-bisphosphate (FBP). Functionally, catalyzes the conversion of lactate to pyruvate. The sequence is that of L-lactate dehydrogenase from Streptococcus equinus (Streptococcus bovis).